Consider the following 333-residue polypeptide: Protein-methionine-sulfoxide reductase catalytic subunit MsrP (333 aa).

Residues 1-43 (MSKQRKLTEADVTPESVFYQRRKVLQALGITAASLALPHNAQA) constitute a signal peptide (tat-type signal). Mo-molybdopterin-binding positions include asparagine 87, 90–91 (YE), cysteine 145, threonine 180, asparagine 232, arginine 237, and 248–250 (GIK).

It belongs to the MsrP family. In terms of assembly, heterodimer of a catalytic subunit (MsrP) and a heme-binding subunit (MsrQ). The cofactor is Mo-molybdopterin. In terms of processing, predicted to be exported by the Tat system. The position of the signal peptide cleavage has not been experimentally proven.

It localises to the periplasm. The catalysed reaction is L-methionyl-[protein] + a quinone + H2O = L-methionyl-(S)-S-oxide-[protein] + a quinol. The enzyme catalyses L-methionyl-[protein] + a quinone + H2O = L-methionyl-(R)-S-oxide-[protein] + a quinol. Part of the MsrPQ system that repairs oxidized periplasmic proteins containing methionine sulfoxide residues (Met-O), using respiratory chain electrons. Thus protects these proteins from oxidative-stress damage caused by reactive species of oxygen and chlorine generated by the host defense mechanisms. MsrPQ is essential for the maintenance of envelope integrity under bleach stress, rescuing a wide series of structurally unrelated periplasmic proteins from methionine oxidation. The catalytic subunit MsrP is non-stereospecific, being able to reduce both (R-) and (S-) diastereoisomers of methionine sulfoxide. The polypeptide is Protein-methionine-sulfoxide reductase catalytic subunit MsrP (Serratia proteamaculans (strain 568)).